Reading from the N-terminus, the 378-residue chain is AA13 family lytic polysaccharide monooxygenase A (378 aa).

The signal sequence occupies residues 1-17; it reads MKWSVIQALALASGVQA. Cu(2+) is bound at residue His-18. The residue at position 18 (His-18) is a Methylhistidine. The region spanning 18-244 is the Chitin-binding type-4 domain; it reads HGYLTFPMSR…PQIYLTCADI (227 aa). Disulfide bonds link Cys-39-Cys-42, Cys-65-Cys-241, Cys-101-Cys-199, Cys-117-Cys-144, Cys-152-Cys-160, Cys-166-Cys-172, and Cys-180-Cys-188. His-108 serves as a coordination point for Cu(2+). N-linked (GlcNAc...) asparagine glycosylation is present at Asn-221. Cu(2+) is bound at residue Tyr-238. Residues 250–263 show a composition bias toward low complexity; it reads DSQSPPTTTTTSTP. The disordered stretch occupies residues 250–272; sequence DSQSPPTTTTTSTPASPPPTSCA. Residues 272–378 enclose the CBM20 domain; the sequence is ATPAASVAVT…GTATVDTAWK (107 aa).

It belongs to the polysaccharide monooxygenase AA13 family. Requires Cu(2+) as cofactor. O-mannosylated.

It is found in the secreted. The enzyme catalyses starch + reduced acceptor + O2 = D-glucono-1,5-lactone-terminated malto-oligosaccharides + short-chain malto-oligosaccharides + acceptor + H2O.. Activity is inhibited by both beta-cyclodextrin or amylose that block the access to the active site. Functionally, starch-active lytic polysaccharide monooxygenase that oxidizes the C1 position of starch substrates. Catalysis by LPMOs requires the reduction of the active-site copper from Cu(II) to Cu(I) by a reducing agent and H(2)O(2) or O(2) as a cosubstrate. The protein is AA13 family lytic polysaccharide monooxygenase A of Pyricularia oryzae (strain 70-15 / ATCC MYA-4617 / FGSC 8958) (Rice blast fungus).